A 485-amino-acid polypeptide reads, in one-letter code: MRIAMVSYEVYPFAKVGGLADVVGALPKYLERQNINVDIYMPYHKKVKQNAEKYGWAIEKITEKVDASMLRTEEKFEIYKTMLPGTKEVNVFLINNEYYFNADEVYAGPDLAEQAIFFSYSVIEAIRKLNFEYDIVHVNDWQTALIPVYLKTVFRDDPLLSKIATVLTIHNLGYQGIFEPEYLRFAGLPDYLYNIDGIEFYGKINFLKGGIIFSDIINTVSPTYAKEIQQKEYGEKLEGVLRARSSDLYGILNGIDYEEFNPLTDNKIYVNYDLNTIEKKKENKKLLQKELGLPERDVPMFGMINRLVDQKGLDIMAEIMDYVSLFDIQFVLLGTGEEKYENMFKKLGEKYPEKYSINLKFDIVLAQKIYAGCDMFLMPSRYEPCGLGQMYSLRYGTIPIVRYTGGLADTVKEYNPETKEGNGFGFEGFDPAHLLKAMARAIYFYNSKEDWNTLIKNAMTMDLSWDKSAKEYVKLYQRAKSKVQR.

K15 contacts ADP-alpha-D-glucose.

This sequence belongs to the glycosyltransferase 1 family. Bacterial/plant glycogen synthase subfamily.

It carries out the reaction [(1-&gt;4)-alpha-D-glucosyl](n) + ADP-alpha-D-glucose = [(1-&gt;4)-alpha-D-glucosyl](n+1) + ADP + H(+). It functions in the pathway glycan biosynthesis; glycogen biosynthesis. In terms of biological role, synthesizes alpha-1,4-glucan chains using ADP-glucose. This is Glycogen synthase from Fervidobacterium nodosum (strain ATCC 35602 / DSM 5306 / Rt17-B1).